Consider the following 604-residue polypeptide: Elongation factor 4 (604 aa).

The tr-type G domain occupies 7 to 189; it reads KNIRNFCIIA…QIVTKIPAPS (183 aa). GTP-binding positions include 19–24 and 136–139; these read DHGKST and NKID.

The protein belongs to the TRAFAC class translation factor GTPase superfamily. Classic translation factor GTPase family. LepA subfamily.

The protein localises to the cell membrane. It carries out the reaction GTP + H2O = GDP + phosphate + H(+). In terms of biological role, required for accurate and efficient protein synthesis under certain stress conditions. May act as a fidelity factor of the translation reaction, by catalyzing a one-codon backward translocation of tRNAs on improperly translocated ribosomes. Back-translocation proceeds from a post-translocation (POST) complex to a pre-translocation (PRE) complex, thus giving elongation factor G a second chance to translocate the tRNAs correctly. Binds to ribosomes in a GTP-dependent manner. This chain is Elongation factor 4, found in Lachnospira eligens (strain ATCC 27750 / DSM 3376 / VPI C15-48 / C15-B4) (Eubacterium eligens).